The primary structure comprises 465 residues: Asparagine--tRNA ligase (465 aa).

This sequence belongs to the class-II aminoacyl-tRNA synthetase family. As to quaternary structure, homodimer.

The protein localises to the cytoplasm. It carries out the reaction tRNA(Asn) + L-asparagine + ATP = L-asparaginyl-tRNA(Asn) + AMP + diphosphate + H(+). The protein is Asparagine--tRNA ligase of Clostridium perfringens (strain SM101 / Type A).